The primary structure comprises 902 residues: Alanine--tRNA ligase (902 aa).

Residues His567, His571, Cys671, and His675 each contribute to the Zn(2+) site.

This sequence belongs to the class-II aminoacyl-tRNA synthetase family. The cofactor is Zn(2+).

It is found in the cytoplasm. It catalyses the reaction tRNA(Ala) + L-alanine + ATP = L-alanyl-tRNA(Ala) + AMP + diphosphate. Catalyzes the attachment of alanine to tRNA(Ala) in a two-step reaction: alanine is first activated by ATP to form Ala-AMP and then transferred to the acceptor end of tRNA(Ala). Also edits incorrectly charged Ser-tRNA(Ala) and Gly-tRNA(Ala) via its editing domain. The chain is Alanine--tRNA ligase from Mycoplasmoides gallisepticum (strain R(low / passage 15 / clone 2)) (Mycoplasma gallisepticum).